The following is a 512-amino-acid chain: Norfluorocurarine oxidase (512 aa).

Residues 3-23 traverse the membrane as a helical segment; it reads LLLNPSLFSLLPLLLFIIFLF. Cys453 is a binding site for heme.

The protein belongs to the cytochrome P450 family. Heme serves as cofactor.

It localises to the membrane. It catalyses the reaction norfluorocurarine + reduced [NADPH--hemoprotein reductase] + O2 = 18-hydroxynorfluorocurarine + oxidized [NADPH--hemoprotein reductase] + H2O + H(+). It participates in alkaloid biosynthesis. Its function is as follows. Monooxygenase involved in the biosynthesis of curare monoterpene indole alkaloids (MIAs), natural products such as diaboline, a pharmacologically active compound used to regulate blood pressure. Curare alkaloids act as animal glycine receptor antagonists. Catalyzes the conversion of norfluorocurarine to 18-OH norfluorocurarine. In Strychnos sp, this protein is Norfluorocurarine oxidase.